A 325-amino-acid polypeptide reads, in one-letter code: Gamma-hemolysin component B (325 aa).

Positions M1–A26 are cleaved as a signal peptide.

It belongs to the aerolysin family. In terms of assembly, toxicity requires sequential binding and synergistic association of a class S and a class F component which form heterooligomeric complexes. HlgB (class F) associates with either hlgA thus forming an AB toxin or with hlgC thus forming a CB toxin. Interacts with host AMFR.

The protein resides in the secreted. Toxin that seems to act by forming pores in the membrane of the cell. Has a hemolytic and a leucotoxic activity. Promotes host AMFR-mediated inflammation by mediating 'Lys-27'-linked ubiquitination of TAB3, TAK1-TAB3 complex formation and phosphorylation of TAK1/MAP3K7. In turn, activates host NF-kappa-B signaling pathway. This is Gamma-hemolysin component B (hlgB) from Staphylococcus aureus (strain NCTC 8325 / PS 47).